The sequence spans 148 residues: Large ribosomal subunit protein bL9 (148 aa).

Belongs to the bacterial ribosomal protein bL9 family.

In terms of biological role, binds to the 23S rRNA. The sequence is that of Large ribosomal subunit protein bL9 from Frankia casuarinae (strain DSM 45818 / CECT 9043 / HFP020203 / CcI3).